A 375-amino-acid polypeptide reads, in one-letter code: Protein RecA (375 aa).

75–82 is an ATP binding site; that stretch reads GPESSGKT. The segment at 339 to 375 is disordered; it reads GPYAKMKDEQTEEAAGDQMDEDKPIDLSPNFDDDDAN. Residues 348-358 show a composition bias toward acidic residues; the sequence is QTEEAAGDQMD.

It belongs to the RecA family.

Its subcellular location is the cytoplasm. Can catalyze the hydrolysis of ATP in the presence of single-stranded DNA, the ATP-dependent uptake of single-stranded DNA by duplex DNA, and the ATP-dependent hybridization of homologous single-stranded DNAs. It interacts with LexA causing its activation and leading to its autocatalytic cleavage. The protein is Protein RecA of Corynebacterium jeikeium (strain K411).